Consider the following 464-residue polypeptide: FERM domain-containing protein 8 (464 aa).

Position 1 is an N-acetylmethionine (Met-1). The segment at 1–22 is disordered; sequence MDGTEGSAGQPGPAERSHRSSV. A Phosphoserine modification is found at Ser-24. One can recognise an FERM domain in the interval 30–376; the sequence is ADVLVYLADD…YCIELSQAAE (347 aa). Residues 376–408 form a disordered region; the sequence is EPAGPQDSATGSPSDPSSSLAPVQRPKLRRQGS. Phosphoserine occurs at positions 383, 387, and 408. At Thr-419 the chain carries Phosphothreonine. A phosphoserine mark is found at Ser-439 and Ser-446.

As to quaternary structure, interacts with iRhom1/RHBDF1 and iRhom2/RHBDF2 (via cytoplasmic N-termini); this interaction leads to mutual protein stabilization. Interacts with ADAM17; this interaction is indirect and mediated by iRhom proteins. Interacts with LRP6; this interaction affects LRP6-binding to AXIN1. Widely expressed, with high expression in heart and spleen.

The protein resides in the cytoplasm. It is found in the cytosol. Its subcellular location is the cell membrane. Its function is as follows. Promotes the cell surface stability of iRhom1/RHBDF1 and iRhom2/RHBDF2 and prevents their degradation via the endolysosomal pathway. By acting on iRhoms, involved in ADAM17-mediated shedding of TNF, amphiregulin/AREG, HBEGF and TGFA from the cell surface. Negatively regulates Wnt signaling, possibly by antagonizing the recruitment of AXIN1 to LRP6. The polypeptide is FERM domain-containing protein 8 (FRMD8) (Homo sapiens (Human)).